Reading from the N-terminus, the 353-residue chain is Protein-glutamate methylesterase/protein-glutamine glutaminase 4 (353 aa).

The Response regulatory domain occupies 7 to 124 (RILVAEDSPT…SPDFDADSRR (118 aa)). At aspartate 58 the chain carries 4-aspartylphosphate. Positions 158 to 350 (PVSPTRPGVV…SRLTSAFRGS (193 aa)) constitute a CheB-type methylesterase domain. Active-site residues include serine 172, histidine 199, and aspartate 292.

The protein belongs to the CheB family. In terms of processing, phosphorylated by CheA. Phosphorylation of the N-terminal regulatory domain activates the methylesterase activity.

The protein localises to the cytoplasm. The enzyme catalyses [protein]-L-glutamate 5-O-methyl ester + H2O = L-glutamyl-[protein] + methanol + H(+). It catalyses the reaction L-glutaminyl-[protein] + H2O = L-glutamyl-[protein] + NH4(+). Its function is as follows. Involved in chemotaxis. Part of a chemotaxis signal transduction system that modulates chemotaxis in response to various stimuli. Catalyzes the demethylation of specific methylglutamate residues introduced into the chemoreceptors (methyl-accepting chemotaxis proteins or MCP) by CheR. Also mediates the irreversible deamidation of specific glutamine residues to glutamic acid. This chain is Protein-glutamate methylesterase/protein-glutamine glutaminase 4, found in Myxococcus xanthus (strain DK1622).